The following is a 374-amino-acid chain: N5-carboxyaminoimidazole ribonucleotide synthase (374 aa).

ATP contacts are provided by residues arginine 108, lysine 148, 153–159, 183–186, glutamate 191, histidine 214, and 266–267; these read GYDGKGQ, EKYL, and NE. One can recognise an ATP-grasp domain in the interval 112–296; the sequence is KETLKSAGTK…QFDTHILAVT (185 aa).

The protein belongs to the PurK/PurT family. Homodimer.

It catalyses the reaction 5-amino-1-(5-phospho-beta-D-ribosyl)imidazole + hydrogencarbonate + ATP = 5-carboxyamino-1-(5-phospho-D-ribosyl)imidazole + ADP + phosphate + 2 H(+). It functions in the pathway purine metabolism; IMP biosynthesis via de novo pathway; 5-amino-1-(5-phospho-D-ribosyl)imidazole-4-carboxylate from 5-amino-1-(5-phospho-D-ribosyl)imidazole (N5-CAIR route): step 1/2. Catalyzes the ATP-dependent conversion of 5-aminoimidazole ribonucleotide (AIR) and HCO(3)(-) to N5-carboxyaminoimidazole ribonucleotide (N5-CAIR). The sequence is that of N5-carboxyaminoimidazole ribonucleotide synthase from Staphylococcus aureus (strain Mu50 / ATCC 700699).